The chain runs to 964 residues: Isoleucine--tRNA ligase (964 aa).

The 'HIGH' region signature appears at 66-76 (PYANGDIHIGH). Residue E596 coordinates L-isoleucyl-5'-AMP. A 'KMSKS' region motif is present at residues 637–641 (KMSKS). K640 contacts ATP. C927, C930, C947, and C950 together coordinate Zn(2+).

Belongs to the class-I aminoacyl-tRNA synthetase family. IleS type 1 subfamily. As to quaternary structure, monomer. Zn(2+) serves as cofactor.

It is found in the cytoplasm. It carries out the reaction tRNA(Ile) + L-isoleucine + ATP = L-isoleucyl-tRNA(Ile) + AMP + diphosphate. Its function is as follows. Catalyzes the attachment of isoleucine to tRNA(Ile). As IleRS can inadvertently accommodate and process structurally similar amino acids such as valine, to avoid such errors it has two additional distinct tRNA(Ile)-dependent editing activities. One activity is designated as 'pretransfer' editing and involves the hydrolysis of activated Val-AMP. The other activity is designated 'posttransfer' editing and involves deacylation of mischarged Val-tRNA(Ile). This is Isoleucine--tRNA ligase from Cupriavidus necator (strain ATCC 17699 / DSM 428 / KCTC 22496 / NCIMB 10442 / H16 / Stanier 337) (Ralstonia eutropha).